The primary structure comprises 1597 residues: MEAEEAQRGASPPISAIEEFSIIPEAPMRSSQVSALGLEAQEDEDPSYKWREEHRLSATQQSELRDVCDYAIETMPSFPKEGSADVEPNQESLVAEACDTPEHWEAVPQSLAGRQARTLAPPELWACPIQSEHLDMAPFSSDLGSEEEEVEFWPGLTSLTLGSGQAEEEEETSSDNSGQTRYYSPCEEHPAETNQNEGSESGTIRQGEELPPEELQESQGLLHPQEVQVLEEQGQQEAGFRGEGTLREDVCADGLLGEEQMIEQVNDEKGEQKQKQEQVQDVMLGRQGERMGLTGEPEGLNDGEWEQEDMERKAQGQGGPEQGEERKRELQVPEENRADSQDEKSQTFLGKSEEVTGKQEDHGIKEKGVPVSGQEAKEPESWDGGRLGAVGRARSREEENEHHGPSMPALIAPEDSPHCDLFPGASYLMTQIPGTQTESRAEELSPAALSPSLEPIRCSHQPISLLGSFLTEESPDKEIDQNSQQEESRLRKGTVSSQGTEVVFASASVTPPRTPDSAPPSPAEAYPITPASVSARPPVAFPRRETSCAARAPETASAPLSMDDPSPCGTSEMCPAALYGFPSTGTSPPRPPANSTGTVQHLRSDSFPGSHRTEQTPDLVGMLLSYSHSELPQRPPKPAIYSSVTPRRDRRSGRDYSTVSASPTALSTLKQDSQESISNLERPSSPPSIQPWVSPHNPAFATESPAYGSSPSFVSMEDVRIHEPLPPPPPQRRDTHPSVVETDGHARVVVPTLKQHSHPPPLALGSGLHAPHKGPLPQASDPAVARQHRPLPSTPDSSHHAQATPRWRYNKPLPPTPDLPQPHLPPISAPGSSRIYRPLPPLPIIDPPTEPPPLPPKSRGRSRSTRGGHMNSGGHAKTRPACQDWTVPLPASAGRTSWPPATARSTESFTSTSRSKSEVSPGMAFSNMTNFLCPSSPTTPWTPELQGPTSKDEAGVSEHPEAPAREPLRRTTPQQGASGPGRSPVGQARQPEKPSHLHLEKASSWPHRRDSGRPPGDSSGQAVAPSEGANKHKGWSRQGLRRPSILPEGSSDSRGPAVEKHPGPSDTVVFREKKPKEVMGGFSRRCSKLINSSQLLYQEYSDVVLNKEIQSQQRLESLSETPGPSSPRQPRKALVSSESYLQRLSMASSGSLWQEIPVVRNSTVLLSMTHEDQKLQEVKFELIVSEASYLRSLNIAVDHFQLSTSLRATLSNQEHQWLFSRLQDVRDVSATFLSDLEENFENNIFSFQVCDVVLNHAPDFRRVYLPYVTNQTYQERTFQSLMNSNSNFREVLEKLESDPVCQRLSLKSFLILPFQRITRLKLLLQNILKRTQPGSSEEAEATKAHHALEQLIRDCNNNVQSMRRTEELIYLSQKIEFECKIFPLISQSRWLVKSGELTALEFSASPGLRRKLNTRPVHLHLFNDCLLLSRPREGSRFLVFDHAPFSSIRGEKCEMKLHGPHKNLFRLFLRQNTQGAQAEFLFRTETQSEKLRWISALAMPREELDLLECYNSPQVQCLRAYKPRENDELALEKADVVMVTQQSSDGWLEGVRLSDGERGWFPVQQVEFISNPEVRAQNLKEAHRVKTAKLQLVEQQA.

Disordered regions lie at residues 138–246 (PFSS…EGTL), 258–455 (EEQM…SLEP), and 467–1072 (GSFL…VFRE). Ser184 carries the phosphoserine modification. Residues 192–204 (ETNQNEGSESGTI) are compositionally biased toward polar residues. Positions 217-237 (ESQGLLHPQEVQVLEEQGQQE) are enriched in low complexity. Basic and acidic residues predominate over residues 266-278 (NDEKGEQKQKQEQ). A compositionally biased stretch (acidic residues) spans 299 to 309 (GLNDGEWEQED). Basic and acidic residues-rich tracts occupy residues 323-368 (GEER…KEKG) and 394-404 (RSREEENEHHG). A compositionally biased stretch (polar residues) spans 428-438 (LMTQIPGTQTE). Ser445 and Ser450 each carry phosphoserine. The segment covering 474-490 (SPDKEIDQNSQQEESRL) has biased composition (basic and acidic residues). Pro residues predominate over residues 512–522 (PRTPDSAPPSP). Composition is skewed to polar residues over residues 583-601 (STGT…TVQH) and 655-682 (DYST…NLER). Positions 731–746 (QRRDTHPSVVETDGHA) are enriched in basic and acidic residues. Composition is skewed to pro residues over residues 812–828 (PLPP…PPIS) and 838–856 (PLPP…PLPP). Arg866 is subject to Asymmetric dimethylarginine. Over residues 901–920 (ATARSTESFTSTSRSKSEVS) the composition is skewed to low complexity. Over residues 926-941 (SNMTNFLCPSSPTTPW) the composition is skewed to polar residues. The span at 950–969 (SKDEAGVSEHPEAPAREPLR) shows a compositional bias: basic and acidic residues. A phosphoserine mark is found at Ser983, Ser1011, and Ser1044. Residues 990–1012 (QPEKPSHLHLEKASSWPHRRDSG) show a composition bias toward basic and acidic residues. The segment covering 1057-1072 (AVEKHPGPSDTVVFRE) has biased composition (basic and acidic residues). Ser1126 is subject to Phosphoserine. Positions 1174 to 1358 (KLQEVKFELI…EQLIRDCNNN (185 aa)) constitute a DH domain. Residues 1390–1502 (WLVKSGELTA…WISALAMPRE (113 aa)) form the PH domain. The 62-residue stretch at 1510–1571 (YNSPQVQCLR…PVQQVEFISN (62 aa)) folds into the SH3 domain.

Interacts with SRC. Forms a ternary complex with SRC and the PI3K 85 kDa subunit. Interacts with and is activated by the heterodimer formed by GNB1 and GNG2. Interacts with ODAM (via C-terminus). Interacts with RHOA. In terms of processing, activation of SRC induces tyrosine phosphorylation of ARHGEF5. In terms of tissue distribution, ubiquitously expressed with highest levels in placenta. High levels are also found in colon, kidney, trachea, prostate, liver, pancreas, pituitary gland, thyroid gland and mammary gland. In fetal tissues, expressed at high levels in kidney, lung and liver. Expressed at low levels in lung and heart.

It localises to the cytoplasm. The protein resides in the nucleus. The protein localises to the cell projection. It is found in the podosome. Guanine nucleotide exchange factor which activates Rho GTPases. Strongly activates RHOA. Also strongly activates RHOB, weakly activates RHOC and RHOG and shows no effect on RHOD, RHOV, RHOQ or RAC1. Involved in regulation of cell shape and actin cytoskeletal organization. Plays a role in actin organization by generating a loss of actin stress fibers and the formation of membrane ruffles and filopodia. Required for SRC-induced podosome formation. Involved in positive regulation of immature dendritic cell migration. In Homo sapiens (Human), this protein is Rho guanine nucleotide exchange factor 5 (ARHGEF5).